Reading from the N-terminus, the 235-residue chain is Large ribosomal subunit protein uL1 (235 aa).

It belongs to the universal ribosomal protein uL1 family. Part of the 50S ribosomal subunit.

Binds directly to 23S rRNA. The L1 stalk is quite mobile in the ribosome, and is involved in E site tRNA release. Functionally, protein L1 is also a translational repressor protein, it controls the translation of the L11 operon by binding to its mRNA. The protein is Large ribosomal subunit protein uL1 of Halothermothrix orenii (strain H 168 / OCM 544 / DSM 9562).